Here is a 272-residue protein sequence, read N- to C-terminus: Orotidine 5'-phosphate decarboxylase (272 aa).

Catalysis depends on Lys96, which acts as the Proton donor.

The protein belongs to the OMP decarboxylase family. Type 2 subfamily.

The enzyme catalyses orotidine 5'-phosphate + H(+) = UMP + CO2. It functions in the pathway pyrimidine metabolism; UMP biosynthesis via de novo pathway; UMP from orotate: step 2/2. The polypeptide is Orotidine 5'-phosphate decarboxylase (Christiangramia forsetii (strain DSM 17595 / CGMCC 1.15422 / KT0803) (Gramella forsetii)).